A 335-amino-acid chain; its full sequence is GTPase Obg (335 aa).

The Obg domain occupies 1-159 (MKFVDSAKIS…YELEMELKLM (159 aa)). The 164-residue stretch at 160 to 323 (ADVGLVGFPN…LKDELWRQVS (164 aa)) folds into the OBG-type G domain. Residues 166–173 (GFPNAGKS), 191–195 (FTTLV), 213–216 (DIPG), 280–283 (TKMD), and 304–306 (SSV) each bind GTP. Ser173 and Thr193 together coordinate Mg(2+).

Belongs to the TRAFAC class OBG-HflX-like GTPase superfamily. OBG GTPase family. In terms of assembly, monomer. The cofactor is Mg(2+).

It is found in the cytoplasm. An essential GTPase which binds GTP, GDP and possibly (p)ppGpp with moderate affinity, with high nucleotide exchange rates and a fairly low GTP hydrolysis rate. Plays a role in control of the cell cycle, stress response, ribosome biogenesis and in those bacteria that undergo differentiation, in morphogenesis control. This chain is GTPase Obg, found in Chlorobaculum tepidum (strain ATCC 49652 / DSM 12025 / NBRC 103806 / TLS) (Chlorobium tepidum).